The following is a 338-amino-acid chain: Phosphatidate cytidylyltransferase, mitochondrial (338 aa).

Belongs to the TAM41 family. Mg(2+) is required as a cofactor.

It localises to the mitochondrion inner membrane. The catalysed reaction is a 1,2-diacyl-sn-glycero-3-phosphate + CTP + H(+) = a CDP-1,2-diacyl-sn-glycerol + diphosphate. The protein operates within phospholipid metabolism; CDP-diacylglycerol biosynthesis; CDP-diacylglycerol from sn-glycerol 3-phosphate: step 3/3. In terms of biological role, catalyzes the conversion of phosphatidic acid (PA) to CDP-diacylglycerol (CDP-DAG), an essential intermediate in the synthesis of phosphatidylglycerol, cardiolipin and phosphatidylinositol. In Xenopus laevis (African clawed frog), this protein is Phosphatidate cytidylyltransferase, mitochondrial (tamm41).